Here is a 668-residue protein sequence, read N- to C-terminus: DNA ligase (668 aa).

Residues 34–38, 83–84, and glutamate 113 each bind NAD(+); these read DAEYD and SL. Lysine 115 serves as the catalytic N6-AMP-lysine intermediate. NAD(+) contacts are provided by arginine 136, glutamate 170, lysine 286, and lysine 310. Zn(2+) contacts are provided by cysteine 404, cysteine 407, cysteine 422, and cysteine 427. One can recognise a BRCT domain in the interval 590-668; sequence DSDSYFAGKT…EEQLMGELKK (79 aa).

The protein belongs to the NAD-dependent DNA ligase family. LigA subfamily. Mg(2+) serves as cofactor. Mn(2+) is required as a cofactor.

The enzyme catalyses NAD(+) + (deoxyribonucleotide)n-3'-hydroxyl + 5'-phospho-(deoxyribonucleotide)m = (deoxyribonucleotide)n+m + AMP + beta-nicotinamide D-nucleotide.. Functionally, DNA ligase that catalyzes the formation of phosphodiester linkages between 5'-phosphoryl and 3'-hydroxyl groups in double-stranded DNA using NAD as a coenzyme and as the energy source for the reaction. It is essential for DNA replication and repair of damaged DNA. The polypeptide is DNA ligase (Bacillus subtilis (strain 168)).